The chain runs to 127 residues: Aspartate 1-decarboxylase (127 aa).

S25 serves as the catalytic Schiff-base intermediate with substrate; via pyruvic acid. S25 is modified (pyruvic acid (Ser)). T57 lines the substrate pocket. The Proton donor role is filled by Y58. 73–75 is a substrate binding site; the sequence is GAA.

Belongs to the PanD family. In terms of assembly, heterooctamer of four alpha and four beta subunits. Requires pyruvate as cofactor. Is synthesized initially as an inactive proenzyme, which is activated by self-cleavage at a specific serine bond to produce a beta-subunit with a hydroxyl group at its C-terminus and an alpha-subunit with a pyruvoyl group at its N-terminus.

Its subcellular location is the cytoplasm. The catalysed reaction is L-aspartate + H(+) = beta-alanine + CO2. Its pathway is cofactor biosynthesis; (R)-pantothenate biosynthesis; beta-alanine from L-aspartate: step 1/1. In terms of biological role, catalyzes the pyruvoyl-dependent decarboxylation of aspartate to produce beta-alanine. This is Aspartate 1-decarboxylase from Listeria monocytogenes serovar 1/2a (strain ATCC BAA-679 / EGD-e).